Here is a 127-residue protein sequence, read N- to C-terminus: Probable 4-amino-4-deoxy-L-arabinose-phosphoundecaprenol flippase subunit ArnF (127 aa).

The Cytoplasmic segment spans residues 1-2 (MG). The helical transmembrane segment at 3–23 (LLFALGSVVLVSAAQLLLKWA) threads the bilayer. The Periplasmic portion of the chain corresponds to 24-47 (MIQLPDISQLPQFLSSLSQFPLPT). The helical transmembrane segment at 48–68 (AALFLGLLAYALSMLCWLLAL) threads the bilayer. Residues 69 to 76 (KRLPLSRA) are Cytoplasmic-facing. A helical membrane pass occupies residues 77–97 (YPLLSLSYLLVWLAALWLPGL). The Periplasmic segment spans residues 98–102 (NEVFR). The chain crosses the membrane as a helical span at residues 103–123 (WGKLAGAGLIVSGLLLICWPA). At 124 to 127 (AKTR) the chain is on the cytoplasmic side.

It belongs to the ArnF family. As to quaternary structure, heterodimer of ArnE and ArnF.

It is found in the cell inner membrane. It functions in the pathway bacterial outer membrane biogenesis; lipopolysaccharide biosynthesis. Translocates 4-amino-4-deoxy-L-arabinose-phosphoundecaprenol (alpha-L-Ara4N-phosphoundecaprenol) from the cytoplasmic to the periplasmic side of the inner membrane. The chain is Probable 4-amino-4-deoxy-L-arabinose-phosphoundecaprenol flippase subunit ArnF from Erwinia tasmaniensis (strain DSM 17950 / CFBP 7177 / CIP 109463 / NCPPB 4357 / Et1/99).